Consider the following 263-residue polypeptide: 7beta-hydroxysteroid dehydrogenase (263 aa).

NADP(+)-binding positions include 17–21, 40–41, and 66–67; these read TEGVG, RR, and DF. Tyr156 (proton acceptor) is an active-site residue. An NADP(+)-binding site is contributed by Ser240.

The protein belongs to the short-chain dehydrogenases/reductases (SDR) family.

It catalyses the reaction a 7beta-hydroxysteroid + NADP(+) = a 7-oxosteroid + NADPH + H(+). It carries out the reaction 7-oxolithocholate + NADPH + H(+) = ursodeoxycholate + NADP(+). In terms of biological role, 7beta-hydroxysteroid dehydrogenase that catalyzes the reduction of the 7-oxo group of 7-oxo-lithocholate (7-oxo-LCA), to yield ursodeoxycholate (UDCA). As R.gnavus is a common core bacterium of the human gut microbiota, this enzyme contributes to the formation of UDCA in the human colon. UDCA is regarded as a chemopreventive beneficial secondary bile acid due to its low hydrophobicity; it protects hepatocytes and bile duct epithelial cells against necrosis and apoptosis induced by more hydrophobic secondary bile acids like deoxycholate (DCA). This enzyme is also able to catalyze the reverse reaction in vitro, i.e. the oxidation of the 7beta-hydroxy group of UDCA to 7-oxo-LCA, but much less efficiently than the reduction reaction. The sequence is that of 7beta-hydroxysteroid dehydrogenase from Mediterraneibacter gnavus (strain ATCC 29149 / DSM 114966 / JCM 6515 / VPI C7-9) (Ruminococcus gnavus).